The following is a 631-amino-acid chain: tRNA uridine 5-carboxymethylaminomethyl modification enzyme MnmG (631 aa).

FAD is bound by residues 13–18, valine 125, and serine 180; that span reads GGGHAG. 273–287 contacts NAD(+); sequence GPRYCPSIEDKVNRY. Glutamine 370 serves as a coordination point for FAD.

It belongs to the MnmG family. In terms of assembly, homodimer. Heterotetramer of two MnmE and two MnmG subunits. FAD serves as cofactor.

It localises to the cytoplasm. Its function is as follows. NAD-binding protein involved in the addition of a carboxymethylaminomethyl (cmnm) group at the wobble position (U34) of certain tRNAs, forming tRNA-cmnm(5)s(2)U34. In Alcanivorax borkumensis (strain ATCC 700651 / DSM 11573 / NCIMB 13689 / SK2), this protein is tRNA uridine 5-carboxymethylaminomethyl modification enzyme MnmG.